Consider the following 305-residue polypeptide: Taste receptor type 2 member 13 (305 aa).

The Extracellular segment spans residues 1–7; sequence MGSSLYD. The helical transmembrane segment at 8–28 threads the bilayer; sequence ILTIVMIAEFIFGNVTNGFIV. The Cytoplasmic portion of the chain corresponds to 29–42; it reads LTNCIAWLSKRTLS. A helical transmembrane segment spans residues 43-63; it reads FIGWIQLFLAISRVVLIWEML. At 64 to 88 the chain is on the extracellular side; it reads LAWLKYMKYSFSYLAGTELRVMMLT. A helical membrane pass occupies residues 89–109; it reads WVVSNHFSLWLATILSIFYLL. Residues 110–128 lie on the Cytoplasmic side of the membrane; the sequence is KIASFSRPVFLYLKWRVKK. The helical transmembrane segment at 129–149 threads the bilayer; sequence VLLLILLGNLIFLMFNILQIN. The Extracellular segment spans residues 150-182; sequence THIEDWMDQYKRNITWDSRVNEFVGFSNLVLLE. An N-linked (GlcNAc...) asparagine glycan is attached at Asn162. A helical transmembrane segment spans residues 183–203; the sequence is MIMFSVTPFTVALVSFILLIF. Over 204 to 232 the chain is Cytoplasmic; it reads SLWKHLQKMHLSSRGERDPSTKAHVNALR. A helical membrane pass occupies residues 233 to 253; the sequence is IMVSFLLLYATYFISFFISLI. Residues 254–262 lie on the Extracellular side of the membrane; it reads PMAHKKGLD. A helical transmembrane segment spans residues 263–283; sequence LMFSLTVGLFYPSSHSFILIL. Topologically, residues 284–305 are cytoplasmic; it reads GHSNLRHSSCLVITYLRCKEKD.

This sequence belongs to the G-protein coupled receptor T2R family. As to expression, expressed in subsets of taste receptor cells of the tongue and palate epithelium and exclusively in gustducin-positive cells. Expressed in 15% taste bud cells in circumvallate and foliate papillae but only in 2% in fungiform papillae. Expressed in the duodenum, antrum and fundus (part of the stomach).

The protein resides in the membrane. Its function is as follows. Receptor that may play a role in the perception of bitterness and is gustducin-linked. May play a role in sensing the chemical composition of the gastrointestinal content. The activity of this receptor may stimulate alpha gustducin, mediate PLC-beta-2 activation and lead to the gating of TRPM5. The chain is Taste receptor type 2 member 13 (Tas2r13) from Rattus norvegicus (Rat).